The following is a 140-amino-acid chain: MAIERTFSMIKPDATKRNLTGAITKVFEDNGLRIVASKRVWMSKREAEGFYAVHKERPFFGELVEGMTSGPTIVQVLEGENAILKNREIMGATNPAQAAEGTIRKSFALSIGENSVHGSDAPETAAQEIAYWFAETEIVG.

The ATP site is built by Lys11, Phe59, Arg87, Thr93, Arg104, and Asn114. His117 (pros-phosphohistidine intermediate) is an active-site residue.

This sequence belongs to the NDK family. Homotetramer. Mg(2+) serves as cofactor.

It is found in the cytoplasm. It carries out the reaction a 2'-deoxyribonucleoside 5'-diphosphate + ATP = a 2'-deoxyribonucleoside 5'-triphosphate + ADP. The enzyme catalyses a ribonucleoside 5'-diphosphate + ATP = a ribonucleoside 5'-triphosphate + ADP. Its function is as follows. Major role in the synthesis of nucleoside triphosphates other than ATP. The ATP gamma phosphate is transferred to the NDP beta phosphate via a ping-pong mechanism, using a phosphorylated active-site intermediate. This is Nucleoside diphosphate kinase from Agrobacterium fabrum (strain C58 / ATCC 33970) (Agrobacterium tumefaciens (strain C58)).